The chain runs to 300 residues: Protein orai (300 aa).

The Cytoplasmic portion of the chain corresponds to 1 to 128 (MPRSHDPSRV…SKAQLKASSR (128 aa)). Residues 58-82 (QPPSSGGGSRNVGGGDGAAGNSKNG) form a disordered region. Over residues 62–75 (SGGGSRNVGGGDGA) the composition is skewed to gly residues. A helical membrane pass occupies residues 129–146 (TSALLAGFAMVCLVELQY). The Extracellular segment spans residues 147–153 (DDSTSKP). Residues 154 to 174 (LLIVLGVVTSLLVSVHLLALM) form a helical membrane-spanning segment. Residues 175–205 (MSTCILPYMEATGCTQDSPHLKLKFYIDLSW) are Cytoplasmic-facing. The chain crosses the membrane as a helical span at residues 206–226 (LFSTCIGLLLFLVEIGVIFYV). At 227-237 (KFTAVGYPTAG) the chain is on the extracellular side. Residues 238 to 258 (YITTAMLIPVGIVFVLFSYLI) form a helical membrane-spanning segment. At 259 to 300 (HKNRVSHSLGRFKDKVDTMKQFLDVEANLQKSTIAPSTIRDI) the chain is on the cytoplasmic side.

Belongs to the Orai family.

Its subcellular location is the membrane. Its function is as follows. Ca(2+) release-activated Ca(2+)-like (CRAC-like) channel subunit which mediates Ca(2+) influx and increase in Ca(2+)-selective current by synergy with the Ca(2+) sensor, stim-1. Required for Ca(2+) and IP3-dependent contractile activity of sheath cells and the spermatheca. Affects brood size and somatic cell function. This is Protein orai (orai-1) from Caenorhabditis briggsae.